Consider the following 617-residue polypeptide: Thioredoxin reductase (617 aa).

FAD contacts are provided by residues 127–128, 147–150, 163–164, 168–172, A237, D433, and 440–442; these read PG, DYVK, TC, GCVPK, and ELA. C164 and C169 are disulfide-bonded. Residues 514 to 528 are loop important for the interaction with TRX1; that stretch reads HRQKHIRAQKDEYDL. H585 contributes to the FAD binding site. H585 functions as the Proton acceptor in the catalytic mechanism. An intrachain disulfide couples C611 to C616.

The protein belongs to the class-I pyridine nucleotide-disulfide oxidoreductase family. As to quaternary structure, homodimer. FAD serves as cofactor.

Its subcellular location is the mitochondrion. The protein resides in the cytoplasm. It carries out the reaction [thioredoxin]-dithiol + NADP(+) = [thioredoxin]-disulfide + NADPH + H(+). In terms of biological role, catalyzes the transfer of electrons from NADPH to thioredoxins TRX1, TRX2 and TRX3, which in turn act as reductants of disulfide containing proteins. Able to reduce nitroglutathione (GSNO), a compound involved in the transport of nitric oxide (NO); however, TRX1 is more efficient in reducing GSNO. Has no catalytic activity towards oxidized glutathione (GSSG). The chain is Thioredoxin reductase from Plasmodium falciparum (isolate 3D7).